Reading from the N-terminus, the 622-residue chain is DNA-directed RNA polymerase subunit gamma (622 aa).

4 residues coordinate Zn(2+): Cys-70, Cys-72, Cys-85, and Cys-88. Asp-466, Asp-468, and Asp-470 together coordinate Mg(2+).

Belongs to the RNA polymerase beta' chain family. RpoC1 subfamily. In cyanobacteria the RNAP catalytic core is composed of 2 alpha, 1 beta, 1 beta', 1 gamma and 1 omega subunit. When a sigma factor is associated with the core the holoenzyme is formed, which can initiate transcription. Mg(2+) is required as a cofactor. Requires Zn(2+) as cofactor.

The catalysed reaction is RNA(n) + a ribonucleoside 5'-triphosphate = RNA(n+1) + diphosphate. Functionally, DNA-dependent RNA polymerase catalyzes the transcription of DNA into RNA using the four ribonucleoside triphosphates as substrates. The protein is DNA-directed RNA polymerase subunit gamma of Cyanothece sp. (strain PCC 7425 / ATCC 29141).